We begin with the raw amino-acid sequence, 147 residues long: Large ribosomal subunit protein uL15 (147 aa).

A disordered region spans residues Met1–Arg47. The span at Thr23 to Gln35 shows a compositional bias: gly residues.

Belongs to the universal ribosomal protein uL15 family. Part of the 50S ribosomal subunit.

Its function is as follows. Binds to the 23S rRNA. The sequence is that of Large ribosomal subunit protein uL15 from Clostridioides difficile (strain 630) (Peptoclostridium difficile).